The following is a 261-amino-acid chain: Phosphate import ATP-binding protein PstB 1 (261 aa).

The ABC transporter domain maps to 8 to 256; it reads IKVNNLSFYY…PHDSRTREYV (249 aa). Residue 40–47 coordinates ATP; that stretch reads GPSGCGKS.

It belongs to the ABC transporter superfamily. Phosphate importer (TC 3.A.1.7) family. In terms of assembly, the complex is composed of two ATP-binding proteins (PstB), two transmembrane proteins (PstC and PstA) and a solute-binding protein (PstS).

The protein resides in the cell inner membrane. The enzyme catalyses phosphate(out) + ATP + H2O = ADP + 2 phosphate(in) + H(+). In terms of biological role, part of the ABC transporter complex PstSACB involved in phosphate import. Responsible for energy coupling to the transport system. This is Phosphate import ATP-binding protein PstB 1 from Nostoc sp. (strain PCC 7120 / SAG 25.82 / UTEX 2576).